A 437-amino-acid polypeptide reads, in one-letter code: uncharacterized protein (437 aa).

Phosphoserine occurs at positions 290 and 293. Phosphothreonine is present on Thr296. Ser418 and Ser428 each carry phosphoserine.

This is an uncharacterized protein from Schizosaccharomyces pombe (strain 972 / ATCC 24843) (Fission yeast).